The following is a 251-amino-acid chain: Small ribosomal subunit protein uS4c (251 aa).

2 S4 RNA-binding domains span residues 110–170 (MRLD…KLVN) and 189–251 (RTLA…QFSE).

The protein belongs to the universal ribosomal protein uS4 family. Part of the 30S ribosomal subunit. Contacts protein S5. The interaction surface between S4 and S5 is involved in control of translational fidelity.

The protein resides in the plastid. Its subcellular location is the chloroplast. In terms of biological role, one of the primary rRNA binding proteins, it binds directly to 16S rRNA where it nucleates assembly of the body of the 30S subunit. Functionally, with S5 and S12 plays an important role in translational accuracy. In Tetradesmus obliquus (Green alga), this protein is Small ribosomal subunit protein uS4c (rps4).